Here is a 730-residue protein sequence, read N- to C-terminus: Semaphorin-1A (730 aa).

Residues 1-20 form the signal peptide; that stretch reads MRAALVAVAALLWVALHAAA. Residues 21–630 are Extracellular-facing; that stretch reads WVNDVSPKMY…LPIYTAETLT (610 aa). A Sema domain is found at 28–490; that stretch reads KMYVQFGEER…SDDEILAIKL (463 aa). N-linked (GlcNAc...) asparagine glycosylation is found at asparagine 44 and asparagine 71. 2 disulfide bridges follow: cysteine 97–cysteine 107 and cysteine 125–cysteine 134. Residues asparagine 163 and asparagine 267 are each glycosylated (N-linked (GlcNAc...) asparagine). Cystine bridges form between cysteine 244–cysteine 358 and cysteine 268–cysteine 317. N-linked (GlcNAc...) asparagine glycosylation is present at asparagine 360. Intrachain disulfides connect cysteine 493-cysteine 512 and cysteine 504-cysteine 521. Asparagine 539 carries N-linked (GlcNAc...) asparagine glycosylation. Residues 631–651 traverse the membrane as a helical segment; it reads IAIVTSCLGALVVGFISGFLF. Residues 652 to 730 are Cytoplasmic-facing; it reads SRRCRGEDYT…PIQKVKKTYI (79 aa). Positions 708 to 720 are enriched in low complexity; sequence ANGKNANSSAENK. The interval 708–730 is disordered; that stretch reads ANGKNANSSAENKPIQKVKKTYI.

It belongs to the semaphorin family. As to expression, dynamically expressed on a subset of axon pathways in the developing CNS and on circumferential bands of epithelial cells in developing limb buds.

Its subcellular location is the membrane. Plays a role in growth cones guidance. In Schistocerca americana (American grasshopper), this protein is Semaphorin-1A (SEMA-1A).